The sequence spans 511 residues: ADP,ATP carrier protein 4 (511 aa).

A run of 12 helical transmembrane segments spans residues 34 to 54, 71 to 91, 102 to 122, 157 to 177, 192 to 212, 231 to 251, 296 to 316, 330 to 350, 361 to 381, 390 to 410, 453 to 473, and 476 to 496; these read VSKF…QNLI, ISFL…AIYV, IFYL…YVIF, FSLF…LLFW, FYPL…QFLE, FHTL…IIAI, LIAT…GPWK, AAFI…FVVL, FTAA…FFAV, LIIA…IGAI, LGKS…PSAS, and SISI…LWAT.

The protein belongs to the ADP/ATP translocase tlc family.

The protein resides in the cell membrane. Functionally, provides the rickettsial cell with host ATP in exchange for rickettsial ADP. This is an obligate exchange system. This energy acquiring activity is an important component of rickettsial parasitism. This chain is ADP,ATP carrier protein 4 (tlcD), found in Rickettsia felis (strain ATCC VR-1525 / URRWXCal2) (Rickettsia azadi).